Here is a 590-residue protein sequence, read N- to C-terminus: DNA mismatch repair protein MutL (590 aa).

Belongs to the DNA mismatch repair MutL/HexB family.

Functionally, this protein is involved in the repair of mismatches in DNA. It is required for dam-dependent methyl-directed DNA mismatch repair. May act as a 'molecular matchmaker', a protein that promotes the formation of a stable complex between two or more DNA-binding proteins in an ATP-dependent manner without itself being part of a final effector complex. The chain is DNA mismatch repair protein MutL from Caldanaerobacter subterraneus subsp. tengcongensis (strain DSM 15242 / JCM 11007 / NBRC 100824 / MB4) (Thermoanaerobacter tengcongensis).